The chain runs to 124 residues: Small ribosomal subunit protein uS13 (124 aa).

The tract at residues 94–124 (KGLPVRGQRTKTNARTRKGPKRTVAGKKKAR) is disordered.

It belongs to the universal ribosomal protein uS13 family. In terms of assembly, part of the 30S ribosomal subunit. Forms a loose heterodimer with protein S19. Forms two bridges to the 50S subunit in the 70S ribosome.

Functionally, located at the top of the head of the 30S subunit, it contacts several helices of the 16S rRNA. In the 70S ribosome it contacts the 23S rRNA (bridge B1a) and protein L5 of the 50S subunit (bridge B1b), connecting the 2 subunits; these bridges are implicated in subunit movement. Contacts the tRNAs in the A and P-sites. In Pseudarthrobacter chlorophenolicus (strain ATCC 700700 / DSM 12829 / CIP 107037 / JCM 12360 / KCTC 9906 / NCIMB 13794 / A6) (Arthrobacter chlorophenolicus), this protein is Small ribosomal subunit protein uS13.